The sequence spans 67 residues: ATP synthase F(0) complex subunit 8 (67 aa).

Residues 8-24 (TWFTTIVAMILSLFILM) traverse the membrane as a helical segment. The residue at position 54 (lysine 54) is an N6-acetyllysine; alternate. An N6-succinyllysine; alternate modification is found at lysine 54. At lysine 57 the chain carries N6-acetyllysine.

This sequence belongs to the ATPase protein 8 family. Component of the ATP synthase complex composed at least of ATP5F1A/subunit alpha, ATP5F1B/subunit beta, ATP5MC1/subunit c (homooctomer), MT-ATP6/subunit a, MT-ATP8/subunit 8, ATP5ME/subunit e, ATP5MF/subunit f, ATP5MG/subunit g, ATP5MK/subunit k, ATP5MJ/subunit j, ATP5F1C/subunit gamma, ATP5F1D/subunit delta, ATP5F1E/subunit epsilon, ATP5PF/subunit F6, ATP5PB/subunit b, ATP5PD/subunit d, ATP5PO/subunit OSCP. ATP synthase complex consists of a soluble F(1) head domain (subunits alpha(3) and beta(3)) - the catalytic core - and a membrane F(0) domain - the membrane proton channel (subunits c, a, 8, e, f, g, k and j). These two domains are linked by a central stalk (subunits gamma, delta, and epsilon) rotating inside the F1 region and a stationary peripheral stalk (subunits F6, b, d, and OSCP). Interacts with PRICKLE3.

It localises to the mitochondrion membrane. Subunit 8, of the mitochondrial membrane ATP synthase complex (F(1)F(0) ATP synthase or Complex V) that produces ATP from ADP in the presence of a proton gradient across the membrane which is generated by electron transport complexes of the respiratory chain. ATP synthase complex consist of a soluble F(1) head domain - the catalytic core - and a membrane F(1) domain - the membrane proton channel. These two domains are linked by a central stalk rotating inside the F(1) region and a stationary peripheral stalk. During catalysis, ATP synthesis in the catalytic domain of F(1) is coupled via a rotary mechanism of the central stalk subunits to proton translocation. In vivo, can only synthesize ATP although its ATP hydrolase activity can be activated artificially in vitro. Part of the complex F(0) domain. The sequence is that of ATP synthase F(0) complex subunit 8 from Oryctolagus cuniculus (Rabbit).